Here is a 285-residue protein sequence, read N- to C-terminus: Formamidopyrimidine-DNA glycosylase (285 aa).

The active-site Schiff-base intermediate with DNA is P2. The active-site Proton donor is the E3. K61 acts as the Proton donor; for beta-elimination activity in catalysis. Residues H102, R121, and K163 each coordinate DNA. The FPG-type zinc-finger motif lies at N249–K283. Catalysis depends on R273, which acts as the Proton donor; for delta-elimination activity.

Belongs to the FPG family. Monomer. Zn(2+) serves as cofactor.

It catalyses the reaction Hydrolysis of DNA containing ring-opened 7-methylguanine residues, releasing 2,6-diamino-4-hydroxy-5-(N-methyl)formamidopyrimidine.. The catalysed reaction is 2'-deoxyribonucleotide-(2'-deoxyribose 5'-phosphate)-2'-deoxyribonucleotide-DNA = a 3'-end 2'-deoxyribonucleotide-(2,3-dehydro-2,3-deoxyribose 5'-phosphate)-DNA + a 5'-end 5'-phospho-2'-deoxyribonucleoside-DNA + H(+). Its function is as follows. Involved in base excision repair of DNA damaged by oxidation or by mutagenic agents. Acts as a DNA glycosylase that recognizes and removes damaged bases. Has a preference for oxidized purines, such as 7,8-dihydro-8-oxoguanine (8-oxoG). Has AP (apurinic/apyrimidinic) lyase activity and introduces nicks in the DNA strand. Cleaves the DNA backbone by beta-delta elimination to generate a single-strand break at the site of the removed base with both 3'- and 5'-phosphates. This is Formamidopyrimidine-DNA glycosylase from Corynebacterium efficiens (strain DSM 44549 / YS-314 / AJ 12310 / JCM 11189 / NBRC 100395).